A 479-amino-acid chain; its full sequence is Adenosylhomocysteinase (479 aa).

Residues threonine 65, aspartate 144, and glutamate 204 each contribute to the substrate site. 205–207 (TTT) contributes to the NAD(+) binding site. 2 residues coordinate substrate: lysine 234 and aspartate 238. Residues asparagine 239, 268 to 273 (GYGDVG), glutamate 291, asparagine 326, 347 to 349 (IGH), and asparagine 392 each bind NAD(+).

This sequence belongs to the adenosylhomocysteinase family. It depends on NAD(+) as a cofactor.

It is found in the cytoplasm. It catalyses the reaction S-adenosyl-L-homocysteine + H2O = L-homocysteine + adenosine. It functions in the pathway amino-acid biosynthesis; L-homocysteine biosynthesis; L-homocysteine from S-adenosyl-L-homocysteine: step 1/1. In terms of biological role, may play a key role in the regulation of the intracellular concentration of adenosylhomocysteine. This Variovorax paradoxus (strain S110) protein is Adenosylhomocysteinase.